Reading from the N-terminus, the 1001-residue chain is ATP-dependent DNA/RNA helicase DHX36 (1001 aa).

A required for recruitment to cytoplasmic stress granules region spans residues 1–44 (MSYDYHQSWSRDGGPRGSGQGSSGGGGGGSRGSGGGGGGRGGRG). The segment at 1–54 (MSYDYHQSWSRDGGPRGSGQGSSGGGGGGSRGSGGGGGGRGGRGRHPAHLKGRE) is disordered. A required for the pre-miR-134 transport region spans residues 1–97 (MSYDYHQSWS…IVQLLNSVQA (97 aa)). The interval 1 to 193 (MSYDYHQSWS…KKTDPRYIEM (193 aa)) is necessary for nuclear and nucleolar caps localizations. The segment covering 15-41 (PRGSGQGSSGGGGGGSRGSGGGGGGRG) has biased composition (gly residues). The DSM (DHX36-specific motif) stretch occupies residues 46-68 (HPAHLKGREIGLWYAKKQTQKNK). Residues 46-98 (HPAHLKGREIGLWYAKKQTQKNKEAERQERAVVHMDERREEQIVQLLNSVQAK) are required for G4-DNA- and G4-RNA-binding. 2 recA-like domain regions span residues 99–379 (TDKD…MIHI) and 380–621 (PGFT…DYQL). Positions 120–147 (EVSSEKKINSEKKLDNQEKKLLNQEKKT) form a coiled coil. Phosphoserine is present on serine 154. In terms of domain architecture, Helicase ATP-binding spans 210-380 (VNLINNHQVT…FGNCPMIHIP (171 aa)). Residue 226-231 (GCGKTT) participates in ATP binding. A necessary for interaction with single-stranded DNA at the 3'-end of the G4-DNA structure region spans residues 258 to 310 (RRISAISVAERVATERAESCGNGNSTGYQIRLQSRLPRKQGSILYCTTGIILQ). A DEAH box motif is present at residues 327 to 330 (DEIH). 2 residues coordinate Mg(2+): glutamate 328 and histidine 330. The 171-residue stretch at 470–640 (ALIRYIVLEE…ELCLQIKILR (171 aa)) folds into the Helicase C-terminal domain. A necessary for interaction with single-stranded DNA at the 3'-end of the G4-DNA structure region spans residues 491–550 (WDNISTLHDLLMSQVMFKSDKFLIIPLHSLMPTVNQTQVFKKTPPGVRKIVIATNIAETS). A Nuclear localization signal motif is present at residues 510 to 521 (DKFLIIPLHSLM). ATP-binding positions include serine 550 and 595-598 (RAGR). Positions 622–691 (PEILRTPLEE…LGVHLARLPV (70 aa)) are WH domain. 3 necessary for interaction with single-stranded DNA at the 3'-end of the G4-DNA structure regions span residues 631–690 (ELCL…ARLP), 842–853 (NLGKKRKMVKVH), and 863–893 (HPKS…IYLY). The segment at 834 to 898 (PKVAKIRLNL…SIYLYDCTEV (65 aa)) is OB-fold-like subdomains. The residue at position 940 (lysine 940) is an N6-acetyllysine. Residue serine 956 is modified to Phosphoserine.

The protein belongs to the DEAD box helicase family. DEAH subfamily. As to quaternary structure, found in a multi-helicase-TICAM1 complex at least composed of DHX36, DDX1, DDX21 and TICAM1; this complex exists in resting cells with or without dsRNA poly(I:C) ligand stimulation. Interacts (via C-terminus) with TICAM1 (via TIR domain). Interacts (via C-terminus) with DDX21; this interaction serves as bridges to TICAM1. Interacts with TERT; this interaction is dependent on the ability of DHX36 to bind to the G-quadruplex RNA (G4-RNA) structure present in the telomerase RNA template component (TERC). Interacts with DKC1; this interaction is dependent on the ability of DHX36 to bind to the G4-RNA structure present in TERC. Interacts with PARN; this interaction stimulates PARN to enhance uPA mRNA decay. Interacts with EXOSC3; this interaction occurs in a RNase-insensitive manner. Interacts with EXOSC10; this interaction occurs in a RNase-insensitive manner. Interacts with ILF3; this interaction occurs in a RNA-dependent manner. Interacts with ELAVL1; this interaction occurs in an RNA-dependent manner. Interacts with DDX5; this interaction occurs in a RNA-dependent manner. Interacts with DDX17; this interaction occurs in a RNA-dependent manner. Interacts with HDAC1; this interaction occurs in a RNA-dependent manner. Interacts with HDAC3; this interaction occurs in a RNA-dependent manner. Interacts with HDAC4. Interacts with AGO1. Interacts with AGO2. Interacts with ERCC6. Mg(2+) serves as cofactor. Expressed in spermatogonia stem cells and primary spermatocytes (at protein level). Expressed strongly in testis. Weakly expressed in heart, lung, liver, kidney, small intestine, spleen, lymphe node and thymus.

Its subcellular location is the nucleus. The protein resides in the cytoplasm. The protein localises to the cytosol. It localises to the stress granule. It is found in the nucleus speckle. Its subcellular location is the chromosome. The protein resides in the telomere. The protein localises to the mitochondrion. It localises to the perikaryon. It is found in the cell projection. Its subcellular location is the dendrite. The protein resides in the axon. It catalyses the reaction ATP + H2O = ADP + phosphate + H(+). ATPase activity is enhanced in the presence of homomeric poly(U) RNAs, but not by double-stranded DNA (dsDNA), double-stranded RNA (dsRNA) and tRNA. Its function is as follows. Multifunctional ATP-dependent helicase that unwinds G-quadruplex (G4) structures. Plays a role in many biological processes such as genomic integrity, gene expression regulations and as a sensor to initiate antiviral responses. G4 structures correspond to helical structures containing guanine tetrads. Binds with high affinity to and unwinds G4 structures that are formed in nucleic acids (G4-DNA and G4-RNA). Plays a role in genomic integrity. Converts the G4-RNA structure present in telomerase RNA template component (TREC) into a double-stranded RNA to promote P1 helix formation that acts as a template boundary ensuring accurate reverse transcription. Plays a role in transcriptional regulation. Resolves G4-DNA structures in promoters of genes, such as YY1, KIT/c-kit and ALPL and positively regulates their expression. Plays a role in post-transcriptional regulation. Unwinds a G4-RNA structure located in the 3'-UTR polyadenylation site of the pre-mRNA TP53 and stimulates TP53 pre-mRNA 3'-end processing in response to ultraviolet (UV)-induced DNA damage. Binds to the precursor-microRNA-134 (pre-miR-134) terminal loop and regulates its transport into the synapto-dendritic compartment. Involved in the pre-miR-134-dependent inhibition of target gene expression and the control of dendritic spine size. Plays a role in the regulation of cytoplasmic mRNA translation and mRNA stability. Binds to both G4-RNA structures and alternative non-quadruplex-forming sequence within the 3'-UTR of the PITX1 mRNA regulating negatively PITX1 protein expression. Binds to both G4-RNA structure in the 5'-UTR and AU-rich elements (AREs) localized in the 3'-UTR of NKX2-5 mRNA to either stimulate protein translation or induce mRNA decay in an ELAVL1-dependent manner, respectively. Also binds to ARE sequences present in several mRNAs mediating exosome-mediated 3'-5' mRNA degradation. Involved in cytoplasmic urokinase-type plasminogen activator (uPA) mRNA decay. Component of a multi-helicase-TICAM1 complex that acts as a cytoplasmic sensor of viral double-stranded RNA (dsRNA) and plays a role in the activation of a cascade of antiviral responses including the induction of pro-inflammatory cytokines via the adapter molecule TICAM1. Required for the early embryonic development and hematopoiesis. Involved in the regulation of cardioblast differentiation and proliferation during heart development. Involved in spermatogonia differentiation. May play a role in ossification. This Mus musculus (Mouse) protein is ATP-dependent DNA/RNA helicase DHX36.